The following is a 543-amino-acid chain: MKSTLSLTLCVISLLLTLFLAALDIVIVVTLYDTIGIKFHDFGNIGWLVTGYALSNAVFMLLWGRLAEILGTKECLMISVIVFEIGSLISALSNSMATLISGRVVAGFGGSGIESLAFVVGTSIVRENHRGIMITALAISYVIAEGVGPFIGGAFNEHLSWRWCFYINLPIGAFAFIILAFCNTSGEPHQKMWLPSKIKKIMNYDYGELLKASFWKNTFEVLVFKLDMVGIILSSAGFTLLMLGLSFGGNNFPWNSGIIICFFTVGPILLLLFCAYDFHFLSLSGLHYDNKRIKPLLTWNIASNCGIFTSSITGFLSCFAYELQSAYLVQLYQLVFKKKPTLASIHLWELSIPAMIATMAIAYLNSKYGIIKPAIVFGVLCGIVGSGLFTLINGELSQSIGYSILPGIAFGSIFQATLLSSQVQITSDDPDFQNKFIEVTAFNSFAKSLGFAFGGNMGAMIFTASLKNQMRSSQLNIPQFTSVETLLAYSTEHYDGPQSSLSKFINTAIHDVFYCALGCYALSFFFGIFTSSKKTTISAKKQQ.

The Cytoplasmic segment spans residues 1-8; that stretch reads MKSTLSLT. Residues 9 to 29 form a helical membrane-spanning segment; sequence LCVISLLLTLFLAALDIVIVV. Topologically, residues 30-41 are extracellular; it reads TLYDTIGIKFHD. The helical transmembrane segment at 42-62 threads the bilayer; it reads FGNIGWLVTGYALSNAVFMLL. Topologically, residues 63-79 are cytoplasmic; the sequence is WGRLAEILGTKECLMIS. A helical membrane pass occupies residues 80 to 100; the sequence is VIVFEIGSLISALSNSMATLI. Residues 101 to 103 are Extracellular-facing; it reads SGR. A helical transmembrane segment spans residues 104–124; sequence VVAGFGGSGIESLAFVVGTSI. The Cytoplasmic portion of the chain corresponds to 125-131; the sequence is VRENHRG. A helical membrane pass occupies residues 132 to 152; the sequence is IMITALAISYVIAEGVGPFIG. Over 153-162 the chain is Extracellular; the sequence is GAFNEHLSWR. A helical membrane pass occupies residues 163-183; the sequence is WCFYINLPIGAFAFIILAFCN. Residues 184–227 lie on the Cytoplasmic side of the membrane; the sequence is TSGEPHQKMWLPSKIKKIMNYDYGELLKASFWKNTFEVLVFKLD. A helical membrane pass occupies residues 228-248; sequence MVGIILSSAGFTLLMLGLSFG. At 249–255 the chain is on the extracellular side; it reads GNNFPWN. Residues 256 to 276 traverse the membrane as a helical segment; the sequence is SGIIICFFTVGPILLLLFCAY. Residues 277–300 are Cytoplasmic-facing; that stretch reads DFHFLSLSGLHYDNKRIKPLLTWN. Residues 301–321 traverse the membrane as a helical segment; that stretch reads IASNCGIFTSSITGFLSCFAY. Topologically, residues 322–341 are extracellular; it reads ELQSAYLVQLYQLVFKKKPT. The chain crosses the membrane as a helical span at residues 342–362; that stretch reads LASIHLWELSIPAMIATMAIA. Topologically, residues 363-373 are cytoplasmic; it reads YLNSKYGIIKP. Residues 374-394 form a helical membrane-spanning segment; that stretch reads AIVFGVLCGIVGSGLFTLING. Over 395–399 the chain is Extracellular; that stretch reads ELSQS. Residues 400 to 420 traverse the membrane as a helical segment; it reads IGYSILPGIAFGSIFQATLLS. Over 421–443 the chain is Cytoplasmic; it reads SQVQITSDDPDFQNKFIEVTAFN. Residues 444–464 traverse the membrane as a helical segment; the sequence is SFAKSLGFAFGGNMGAMIFTA. Residues 465 to 508 are Extracellular-facing; that stretch reads SLKNQMRSSQLNIPQFTSVETLLAYSTEHYDGPQSSLSKFINTA. Residues 509–529 traverse the membrane as a helical segment; the sequence is IHDVFYCALGCYALSFFFGIF. Residues 530–543 are Cytoplasmic-facing; the sequence is TSSKKTTISAKKQQ.

This sequence belongs to the major facilitator superfamily.

Its subcellular location is the membrane. Drug export permease. Multi-copy suppressor of loss-of-function mutation of GAL11. Involved specifically in transcription of GAL4-dependent genes. Can link GAL4 with the basal transcription machinery if GAL11 is missing. Confers resistance to 10-N-nonyl acridine orange (NAO) and in general to cationic dyes. This is Protein SGE1 (SGE1) from Saccharomyces cerevisiae (strain ATCC 204508 / S288c) (Baker's yeast).